The following is a 287-amino-acid chain: Cyclopropane mycolic acid synthase MmaA2 (287 aa).

Residues 33 to 34, 72 to 74, 94 to 99, 123 to 124, and Ile136 each bind S-adenosyl-L-methionine; these read YS, GCG, TLSKNQ, and WE. Residue Cys269 is part of the active site.

Belongs to the CFA/CMAS family.

It catalyses the reaction a 1-acyl-2-(9Z)-enoyl-sn-glycero-3-phospholipid + S-adenosyl-L-methionine = a 1-acyl-2-(9-cyclopronane)-acyl-sn-glycero-3-phospholipid + S-adenosyl-L-homocysteine + H(+). Its pathway is lipid metabolism; mycolic acid biosynthesis. Catalyzes the conversion of a double bond to a cis cyclopropane ring at the distal position of an alpha mycolic acid via the transfer of a methylene group from S-adenosyl-L-methionine. MmaA2 also catalyzes the biosynthesis of the cis-cyclopropanated methoxymycolates. Cyclopropanated mycolic acids are key factors participating in cell envelope permeability, host immunomodulation and persistence. This is Cyclopropane mycolic acid synthase MmaA2 (mmaA2) from Mycobacterium tuberculosis (strain ATCC 25177 / H37Ra).